A 540-amino-acid polypeptide reads, in one-letter code: (13S,14R)-13-O-acetyl-1-hydroxy-N-methylcanadine 8-hydroxylase CYP82X1 (540 aa).

A helical transmembrane segment spans residues 15–35 (FSIILVTTVSIVLLYSVFFWV). Heme is bound at residue C483.

Belongs to the cytochrome P450 family. Heme is required as a cofactor. Highly expressed in capsules. Expressed is stems.

The protein localises to the membrane. It carries out the reaction (13S,14R)-13-O-acetyl-1-hydroxy-N-methylcanadine + reduced [NADPH--hemoprotein reductase] + O2 = (13S,14R)-13-O-acetyl-1,8-dihydroxy-N-methylcanadine + oxidized [NADPH--hemoprotein reductase] + H2O + H(+). Its pathway is alkaloid biosynthesis. Functionally, cytochrome P450 involved in the biosynthesis of the benzylisoquinoline alkaloid noscapine. Converts (13S,14R)-13-O-acetyl-1-hydroxy-N-methylcanadine to (13S,14R)-13-O-acetyl-1,8-dihydroxy-N-methylcanadine. The sequence is that of (13S,14R)-13-O-acetyl-1-hydroxy-N-methylcanadine 8-hydroxylase CYP82X1 from Papaver somniferum (Opium poppy).